The chain runs to 78 residues: Defensin-like protein (78 aa).

Residues 1–31 form the signal peptide; that stretch reads MGRSIRLFATFFLIAMLFLSTEMGPMTSAEA. 4 disulfides stabilise this stretch: Cys34/Cys78, Cys45/Cys65, Cys51/Cys72, and Cys55/Cys74.

It belongs to the DEFL family. As to expression, predominantly expressed in the pistil during all stages of flower development.

The protein localises to the secreted. Its function is as follows. May be involved in the defense of the pistil against pathogen infection. The protein is Defensin-like protein of Petunia integrifolia (Violet-flowered petunia).